A 343-amino-acid chain; its full sequence is Methionine import ATP-binding protein MetN 1 (343 aa).

The region spanning isoleucine 2–isoleucine 241 is the ABC transporter domain. Residue glycine 38–serine 45 coordinates ATP.

It belongs to the ABC transporter superfamily. Methionine importer (TC 3.A.1.24) family. In terms of assembly, the complex is composed of two ATP-binding proteins (MetN), two transmembrane proteins (MetI) and a solute-binding protein (MetQ).

It localises to the cell inner membrane. The catalysed reaction is L-methionine(out) + ATP + H2O = L-methionine(in) + ADP + phosphate + H(+). The enzyme catalyses D-methionine(out) + ATP + H2O = D-methionine(in) + ADP + phosphate + H(+). Part of the ABC transporter complex MetNIQ involved in methionine import. Responsible for energy coupling to the transport system. This is Methionine import ATP-binding protein MetN 1 from Salmonella paratyphi A (strain ATCC 9150 / SARB42).